A 193-amino-acid polypeptide reads, in one-letter code: Translocation protein SEC72 (193 aa).

As to quaternary structure, component of the heterotetrameric Sec62/63complex composed of SEC62, SEC63, SEC71 and SEC72. The Sec62/63 complex associates with the Sec61 complex to form the Sec complex. May interact with protein YLR301W. Part of a complex consisting of KAR2, SEC63, SEC66 and SEC72.

The protein resides in the cytoplasm. In terms of biological role, acts as a non-essential component of the Sec62/63 complex which is involved in SRP-independent post-translational translocation across the endoplasmic reticulum (ER) and functions together with the Sec61 complex and KAR2 in a channel-forming translocon complex. A cycle of assembly and disassembly of Sec62/63 complex from SEC61 may govern the activity of the translocon. SEC72 may be involved in signal peptide recognition for a defined subset of leader peptides, or may increase the efficiency of unusual or 'difficult' secretory precursors to the translocation pore, it may be that this protein binds charged leader peptides to the membrane until they engage the translocation apparatus. The protein is Translocation protein SEC72 (SEC72) of Saccharomyces cerevisiae (strain ATCC 204508 / S288c) (Baker's yeast).